Consider the following 444-residue polypeptide: Glutamyl-tRNA reductase (444 aa).

Substrate is bound by residues 49-52, Ser109, 114-116, and Gln120; these read TCNR and ETQ. Cys50 acts as the Nucleophile in catalysis. 189–194 contacts NADP(+); sequence GAGKMG.

The protein belongs to the glutamyl-tRNA reductase family. In terms of assembly, homodimer.

The catalysed reaction is (S)-4-amino-5-oxopentanoate + tRNA(Glu) + NADP(+) = L-glutamyl-tRNA(Glu) + NADPH + H(+). The protein operates within porphyrin-containing compound metabolism; protoporphyrin-IX biosynthesis; 5-aminolevulinate from L-glutamyl-tRNA(Glu): step 1/2. Catalyzes the NADPH-dependent reduction of glutamyl-tRNA(Glu) to glutamate 1-semialdehyde (GSA). The sequence is that of Glutamyl-tRNA reductase from Bacillus cereus (strain G9842).